A 140-amino-acid polypeptide reads, in one-letter code: Putative nickel-responsive regulator (140 aa).

Residues His-81, His-92, His-94, and Cys-100 each contribute to the Ni(2+) site.

Belongs to the transcriptional regulatory CopG/NikR family. Requires Ni(2+) as cofactor.

In terms of biological role, transcriptional regulator. This is Putative nickel-responsive regulator from Methanocella arvoryzae (strain DSM 22066 / NBRC 105507 / MRE50).